The chain runs to 331 residues: WW domain-containing protein C2F3.14c (331 aa).

The disordered stretch occupies residues 1-184 (MSSSKDCKAT…TNENQAQPSI (184 aa)). Polar residues predominate over residues 9–22 (ATSNVDQTIPASNV). The span at 23–41 (NSGDFISSNTSSSNSENSN) shows a compositional bias: low complexity. Residues 57-89 (SFISENTPKNTFESTQTYENLESISKNEPTSEA) are compositionally biased toward polar residues. Residues 105–145 (REPPLPNEPVPEEPLPGEPPLPDEPVPEEPLPGEPPLPNEP) show a composition bias toward pro residues. Residues 158–184 (SDETVSETSKNDTSNSPTNENQAQPSI) show a composition bias toward polar residues. Residues 187–220 (SEGHRIAAIWDPSQQAYYFWDTLTNTTSWNNPLE) form the WW domain. The disordered stretch occupies residues 290 to 309 (YTRKEMEQMKRRTKEKKEMK). Positions 292-309 (RKEMEQMKRRTKEKKEMK) are enriched in basic and acidic residues.

It is found in the nucleus. This is WW domain-containing protein C2F3.14c from Schizosaccharomyces pombe (strain 972 / ATCC 24843) (Fission yeast).